The sequence spans 147 residues: uncharacterized protein (147 aa).

This is an uncharacterized protein from Mycoplasma genitalium (strain ATCC 33530 / DSM 19775 / NCTC 10195 / G37) (Mycoplasmoides genitalium).